Here is a 963-residue protein sequence, read N- to C-terminus: Iron-responsive element-binding protein 2 (963 aa).

Cys512, Cys578, and Cys581 together coordinate [4Fe-4S] cluster.

This sequence belongs to the aconitase/IPM isomerase family. As to quaternary structure, interacts with RBCK1 isoform 1 and isoform 2 only in iron-rich conditions. Interacts (when associated with the 4Fe-4S) with FBXL5. Interacts with CIAO1 and CIAO2A. Requires [4Fe-4S] cluster as cofactor. Ubiquitinated and degraded by the proteasome in presence of high level of iron and oxygen. Ubiquitinated by a SCF complex containing FBXL5. Upon iron and oxygen depletion FBXL5 is degraded, preventing ubiquitination and allowing its RNA-binding activity.

It is found in the cytoplasm. In terms of biological role, RNA-binding protein that binds to iron-responsive elements (IRES), which are stem-loop structures found in the 5'-UTR of ferritin, and delta aminolevulinic acid synthase mRNAs, and in the 3'-UTR of transferrin receptor mRNA. Binding to the IRE element in ferritin results in the repression of its mRNA translation. Binding of the protein to the transferrin receptor mRNA inhibits the degradation of this otherwise rapidly degraded mRNA. The polypeptide is Iron-responsive element-binding protein 2 (IREB2) (Homo sapiens (Human)).